Here is a 360-residue protein sequence, read N- to C-terminus: Transcription elongation factor, mitochondrial (360 aa).

A mitochondrion-targeting transit peptide spans 1-35; that stretch reads MSGSVLFTAGERWRCFLTPSRSSLYWALHNFCCRK.

It belongs to the TEFM family. In terms of assembly, interacts with POLRMT.

Its subcellular location is the mitochondrion matrix. The protein resides in the mitochondrion nucleoid. Transcription elongation factor which increases mitochondrial RNA polymerase processivity. Regulates transcription of the mitochondrial genome, including genes important for the oxidative phosphorylation machinery. This chain is Transcription elongation factor, mitochondrial (TEFM), found in Homo sapiens (Human).